The chain runs to 538 residues: MKLESIQVPIKNNVLADYWSPNTAIHQFFEYEFNDQAFEKRAKHLAQHARDQKELTAIIRQFMEPLGLSQKANEHLQQLEQGAMVIIGGQQAGILTGPLYSVHKAISVIVLAKEQSVKLQRSVVPVFWIAGEDHDLEEINHTYTVHGELLKKRAYSERSRRKTMASATMLNKESMTQFIHTVVRDIGETEYTEALIKQLVDVLNESETFTDFFARLMNQLFKDEGLLLIDAADYNFRQYESTNFTHIIQHSEEIARVVTEKEEQLERTGYGKPILATREAANLFYVEDGERHLLERKNDLFINLAANLKFTREELLEIAEKYPERLSNNVVSRPLMQEMTFPVLAFVGGPGELAYWATLKSAFSVLDLQMPIFAPRLHMTIVTRHVEQLLREHQLSVTDVWNGKALEMKERFIHDVQDIEAKRQIQAMEQLLAEKYSELASYLEEQHLTLDKILVKNQENHAKQFDYLQQKIEQTVLDKHETTIRKFTTLQNELYPNEGFQERTYNPYQYFNEFGPMLIAEMLKQNYSIGKHHYLLYL.

Positions I419–E445 form a coiled coil.

This sequence belongs to the BshC family.

In terms of biological role, involved in bacillithiol (BSH) biosynthesis. May catalyze the last step of the pathway, the addition of cysteine to glucosamine malate (GlcN-Mal) to generate BSH. This Lysinibacillus sphaericus (strain C3-41) protein is Putative cysteine ligase BshC.